A 249-amino-acid chain; its full sequence is Triosephosphate isomerase (249 aa).

Position 9 to 11 (9 to 11 (NWK)) interacts with substrate. H94 serves as the catalytic Electrophile. E166 acts as the Proton acceptor in catalysis. Substrate is bound by residues G172 and 232–233 (GG).

It belongs to the triosephosphate isomerase family. Homodimer.

It is found in the cytoplasm. It carries out the reaction D-glyceraldehyde 3-phosphate = dihydroxyacetone phosphate. It functions in the pathway carbohydrate biosynthesis; gluconeogenesis. It participates in carbohydrate degradation; glycolysis; D-glyceraldehyde 3-phosphate from glycerone phosphate: step 1/1. In terms of biological role, involved in the gluconeogenesis. Catalyzes stereospecifically the conversion of dihydroxyacetone phosphate (DHAP) to D-glyceraldehyde-3-phosphate (G3P). The sequence is that of Triosephosphate isomerase from Xylella fastidiosa (strain M23).